Consider the following 398-residue polypeptide: Histidinol dehydrogenase (398 aa).

3 residues coordinate NAD(+): Y114, Q176, and N199. The substrate site is built by T222, Q244, and H247. Positions 244 and 247 each coordinate Zn(2+). Residues E298 and H299 each act as proton acceptor in the active site. Positions 299, 331, 384, and 389 each coordinate substrate. D331 is a binding site for Zn(2+). H389 lines the Zn(2+) pocket.

Belongs to the histidinol dehydrogenase family. Zn(2+) is required as a cofactor.

The catalysed reaction is L-histidinol + 2 NAD(+) + H2O = L-histidine + 2 NADH + 3 H(+). It functions in the pathway amino-acid biosynthesis; L-histidine biosynthesis; L-histidine from 5-phospho-alpha-D-ribose 1-diphosphate: step 9/9. Catalyzes the sequential NAD-dependent oxidations of L-histidinol to L-histidinaldehyde and then to L-histidine. This chain is Histidinol dehydrogenase (hisD), found in Saccharolobus solfataricus (strain ATCC 35092 / DSM 1617 / JCM 11322 / P2) (Sulfolobus solfataricus).